The sequence spans 248 residues: Sperm-specific protein Don juan (248 aa).

Residues 82–147 (KEGNQDELEN…EKKTKCAKKD (66 aa)) adopt a coiled-coil conformation. The segment at 146 to 200 (KDPCKKKDPCKKKDPCKKKDPCKKKDPCKKKDPCKKKDPCKKKDPCKKKGGDLKK) is disordered. A run of 8 repeats spans residues 147–152 (DPCKKK), 153–158 (DPCKKK), 159–164 (DPCKKK), 165–170 (DPCKKK), 171–176 (DPCKKK), 177–182 (DPCKKK), 183–188 (DPCKKK), and 189–194 (DPCKKK). The interval 147-194 (DPCKKKDPCKKKDPCKKKDPCKKKDPCKKKDPCKKKDPCKKKDPCKKK) is 8 X 6 AA tandem repeat of D-P-C-K-K-K. Residues 197-244 (DLKKKCKKLAEKEKCKKLAKKEKMKKLQKKCKKMAQKEKCKKMAKKDK) are a coiled coil.

Expression limited to post-meiotic male germ cells. Expressed in elongated spermatids during individualization and in finally elongated nuclei of spermatids. After completion of nuclear shaping it is no longer expressed in the sperm heads with the onset of individualization.

The protein resides in the nucleus. The protein localises to the mitochondrion. Its function is as follows. May be involved in the final steps of mitochondrial differentiation within the flagellum. The protein is Sperm-specific protein Don juan (dj) of Drosophila melanogaster (Fruit fly).